The chain runs to 163 residues: CASP-like protein 1C2 (163 aa).

Residues 1 to 7 (MAKLHRL) are Cytoplasmic-facing. The chain crosses the membrane as a helical span at residues 8–28 (ISAVLRLAAAGAAAAAAVIMV). Topologically, residues 29–50 (TSHETTSLFGIEMEAKYSYTPS) are extracellular. Residues 51-71 (FVFFVVAFAVTFAYSLLAAVL) form a helical membrane-spanning segment. The Cytoplasmic segment spans residues 72-80 (VRPGTTASR). Residues 81 to 101 (LVLLSDVTVGMLLTGAVAATG) form a helical membrane-spanning segment. Residues 102 to 129 (AISQVGKSGNEHAGWLPICAQVQAYCGH) lie on the Extracellular side of the membrane. The chain crosses the membrane as a helical span at residues 130 to 150 (VMGALIAGFVSLLLYFLIIMY). The Cytoplasmic portion of the chain corresponds to 151-163 (SLHAVAEPLCSCH).

Belongs to the Casparian strip membrane proteins (CASP) family. In terms of assembly, homodimer and heterodimers.

The protein resides in the cell membrane. In Zea mays (Maize), this protein is CASP-like protein 1C2.